The following is a 375-amino-acid chain: Probable disease resistance protein At1g52660 (375 aa).

Residues E158–G372 enclose the NB-ARC domain. G167 to T174 serves as a coordination point for ATP.

In terms of biological role, possible disease resistance protein. The sequence is that of Probable disease resistance protein At1g52660 from Arabidopsis thaliana (Mouse-ear cress).